Here is a 181-residue protein sequence, read N- to C-terminus: Large ribosomal subunit protein uL5 (181 aa).

This sequence belongs to the universal ribosomal protein uL5 family. Part of the 50S ribosomal subunit; part of the 5S rRNA/L5/L18/L25 subcomplex. Contacts the 5S rRNA and the P site tRNA. Forms a bridge to the 30S subunit in the 70S ribosome.

Functionally, this is one of the proteins that bind and probably mediate the attachment of the 5S RNA into the large ribosomal subunit, where it forms part of the central protuberance. In the 70S ribosome it contacts protein S13 of the 30S subunit (bridge B1b), connecting the 2 subunits; this bridge is implicated in subunit movement. Contacts the P site tRNA; the 5S rRNA and some of its associated proteins might help stabilize positioning of ribosome-bound tRNAs. This chain is Large ribosomal subunit protein uL5, found in Clostridium kluyveri (strain NBRC 12016).